Here is a 30-residue protein sequence, read N- to C-terminus: Cytochrome c oxidase subunit 5C (30 aa).

A helical membrane pass occupies residues 15-30 (VVKELVIXXXLGLXAG).

Belongs to the cytochrome c oxidase subunit 5C family.

It is found in the mitochondrion inner membrane. This protein is one of the nuclear-coded polypeptide chains of cytochrome c oxidase, the terminal oxidase in mitochondrial electron transport. In Solanum tuberosum (Potato), this protein is Cytochrome c oxidase subunit 5C (COX5C).